Reading from the N-terminus, the 538-residue chain is Putative cysteine ligase BshC (538 aa).

Residues 460 to 484 (KINEQIELLERMLKRNVEKKHEVEL) are a coiled coil.

This sequence belongs to the BshC family.

Functionally, involved in bacillithiol (BSH) biosynthesis. May catalyze the last step of the pathway, the addition of cysteine to glucosamine malate (GlcN-Mal) to generate BSH. The sequence is that of Putative cysteine ligase BshC from Bacillus cereus (strain AH187).